Consider the following 369-residue polypeptide: Polycomb group protein FERTILIZATION-INDEPENDENT ENDOSPERM (369 aa).

WD repeat units follow at residues 31–73, 81–123, 126–166, 172–212, 238–275, 287–328, and 335–368; these read EGKK…AISA, DKEE…IHKS, GHGD…CILI, GHRY…TYVE, IHTN…NSPG, VPMC…PVLI, and QSKS…DVIT.

The protein belongs to the WD repeat ESC family. Interacts directly with MEA. These two proteins are probably indirectly associated with FIS2. In plants, PcG complexes are probably composed of a member of the EZ family (CLF or MEA), FIE, and a member of the VEFS family (FIS2, VRN2 or EMF2). Component of the plant homeodomain / polycomb repressive complex 2 (PHD-PRC2) large complex during prolonged cold, composed of core PRC2 components (VRN2, EZA1, FIE and MSI1), and three related PHD finger proteins (VIL1, VIL2 and VIN3) that mediates histone H3 trimethylation on 'Lys-27' (H3K27me3). Binds to ALP1. In terms of tissue distribution, expressed in cauline leaves, root and stems. In the male reproductive organ, it is expressed in the developing anther; and is abundant in microspore mother cells, in microsporocytes and in the tapetum, but is absent from vascular bundles, the connective tissue and the filament. It is also absent from pollen grains at subsequent developmental stages. In the developing female reproductive organs, it is highly expressed in all cells of the young ovules primordium before archesporial differentiation. Then, it is highly expressed in the ovule sporophytic tissue and the megaspore mother cell before meiosis, but is absent from placenta or the developing carpel. Then, it decreases.

The protein resides in the nucleus. In terms of biological role, polycomb group (PcG) protein. PcG proteins act by forming multiprotein complexes, which are required to maintain the transcriptionally repressive state of homeotic genes throughout development. PcG proteins are not required to initiate repression, but to maintain it during later stages of development. They probably act via the methylation of histones, rendering chromatin heritably changed in its expressibility. Required to prevent the proliferation of the central cell by repressing unknown target genes before fertilization. Probably also involved in floral repression mechanism established during early plant development. Regulates the anteroposterior organization of the endosperm. Interacts with the promoter and represses the transcription of genes such as PHE1, that are paternally active and maternally silenced. The polypeptide is Polycomb group protein FERTILIZATION-INDEPENDENT ENDOSPERM (FIE) (Arabidopsis thaliana (Mouse-ear cress)).